We begin with the raw amino-acid sequence, 132 residues long: Fertilization-influencing membrane protein (132 aa).

The chain crosses the membrane as a helical span at residues 100-120 (PGLFHHILVGLLVVAFFFLLF).

As to expression, testis-specific.

The protein localises to the cell membrane. May play a role in sperm-oocyte fusion during fertilization. This is Fertilization-influencing membrane protein from Homo sapiens (Human).